A 115-amino-acid polypeptide reads, in one-letter code: Large ribosomal subunit protein bL20 (115 aa).

The protein belongs to the bacterial ribosomal protein bL20 family.

Its function is as follows. Binds directly to 23S ribosomal RNA and is necessary for the in vitro assembly process of the 50S ribosomal subunit. It is not involved in the protein synthesizing functions of that subunit. This is Large ribosomal subunit protein bL20 from Synechococcus sp. (strain RCC307).